A 473-amino-acid chain; its full sequence is Glutamate--tRNA ligase 1 (473 aa).

The 'HIGH' region signature appears at 23–33; the sequence is PSPTGLLHVGG. The 'KMSKS' region motif lies at 252–256; that stretch reads KLSKR. Residue lysine 255 coordinates ATP.

It belongs to the class-I aminoacyl-tRNA synthetase family. Glutamate--tRNA ligase type 1 subfamily. In terms of assembly, monomer.

It localises to the cytoplasm. It carries out the reaction tRNA(Glu) + L-glutamate + ATP = L-glutamyl-tRNA(Glu) + AMP + diphosphate. Functionally, catalyzes the attachment of glutamate to tRNA(Glu) in a two-step reaction: glutamate is first activated by ATP to form Glu-AMP and then transferred to the acceptor end of tRNA(Glu). The sequence is that of Glutamate--tRNA ligase 1 from Granulibacter bethesdensis (strain ATCC BAA-1260 / CGDNIH1).